Reading from the N-terminus, the 21-residue chain is Hemocyanin subunit 1 (21 aa).

Belongs to the tyrosinase family. Hemocyanin subfamily. In terms of tissue distribution, hemolymph.

Its subcellular location is the secreted. The protein resides in the extracellular space. Its function is as follows. Hemocyanins are copper-containing oxygen carriers occurring freely dissolved in the hemolymph of many mollusks and arthropods. The protein is Hemocyanin subunit 1 of Maja squinado (Mediterranean spider crab).